Here is a 32-residue protein sequence, read N- to C-terminus: Fibrinolytic enzyme 2 (32 aa).

The region spanning 1–32 (ISGTSMSCPHVAGRAYVLDTSLRVYLLDTGLR) is the Peptidase S8 domain. The Charge relay system role is filled by serine 5.

It belongs to the peptidase S8 family.

With respect to regulation, inhibited by PMSF. Not inhibited by benzamidine, aprotinin, SBTI, EDTA, EGTA, 2-mercaptoethanol, iodoacetic acid or pepstatin A. Functionally, serine protease. Has fibrinolytic and fibrinogenolytic but no plasminogenolytic activity. Cleaves after Arg and Lys residues. Cleaves fibrinogen alpha chain, beta chain and gamma chain in that order. The polypeptide is Fibrinolytic enzyme 2 (Hediste japonica (Polychaete worm)).